Consider the following 117-residue polypeptide: MKKNTHPQYQKVLFIDSASGHRFVCGSTLKPDATEKFEGVEYPVSYLSISSSSHPFFTGSKQLVDSEGRVEKFKKRFERKKEASPADTPPESDSTTENASVEKKAEKKRVTAKGSKK.

The disordered stretch occupies residues 75–117; sequence KRFERKKEASPADTPPESDSTTENASVEKKAEKKRVTAKGSKK. The span at 100–109 shows a compositional bias: basic and acidic residues; sequence SVEKKAEKKR.

This sequence belongs to the bacterial ribosomal protein bL31 family. Type B subfamily. As to quaternary structure, part of the 50S ribosomal subunit.

The protein is Large ribosomal subunit protein bL31B of Protochlamydia amoebophila (strain UWE25).